We begin with the raw amino-acid sequence, 258 residues long: Large ribosomal subunit protein uL3 (258 aa).

Belongs to the universal ribosomal protein uL3 family. Part of the 50S ribosomal subunit. Forms a cluster with proteins L14 and L19.

In terms of biological role, one of the primary rRNA binding proteins, it binds directly near the 3'-end of the 23S rRNA, where it nucleates assembly of the 50S subunit. This Spiroplasma kunkelii protein is Large ribosomal subunit protein uL3.